A 20-amino-acid polypeptide reads, in one-letter code: Manganese peroxidase H5 (20 aa).

Belongs to the peroxidase family. Ligninase subfamily.

It localises to the secreted. It carries out the reaction 2 Mn(2+) + H2O2 + 2 H(+) = 2 Mn(3+) + 2 H2O. Catalyzes the oxidation of Mn(2+) to Mn(3+). The latter, acting as a diffusible redox mediator, is capable of oxidizing a variety of lignin compounds. The sequence is that of Manganese peroxidase H5 from Phanerodontia chrysosporium (White-rot fungus).